The chain runs to 472 residues: Chromosomal replication initiator protein DnaA (472 aa).

The tract at residues 1-73 is domain I, interacts with DnaA modulators; that stretch reads MSNMEHDRWS…LTCWQAELPE (73 aa). A domain II region spans residues 73–128; the sequence is EVCRIDLTVRSPMRAAVAKEAAAPVEHRRAEHRPATETRSHATVPASSNHDALGGS. A disordered region spans residues 92–127; the sequence is EAAAPVEHRRAEHRPATETRSHATVPASSNHDALGG. Over residues 97–112 the composition is skewed to basic and acidic residues; sequence VEHRRAEHRPATETRS. The tract at residues 129 to 351 is domain III, AAA+ region; that stretch reads PLDPRLTFAS…GAINRLLAHS (223 aa). ATP is bound by residues G176, G178, K179, and T180. Residues 352–472 form a domain IV, binds dsDNA region; sequence KLNAQPVTLE…VDSLKRQLQE (121 aa).

It belongs to the DnaA family. Oligomerizes as a right-handed, spiral filament on DNA at oriC.

It is found in the cytoplasm. Plays an essential role in the initiation and regulation of chromosomal replication. ATP-DnaA binds to the origin of replication (oriC) to initiate formation of the DNA replication initiation complex once per cell cycle. Binds the DnaA box (a 9 base pair repeat at the origin) and separates the double-stranded (ds)DNA. Forms a right-handed helical filament on oriC DNA; dsDNA binds to the exterior of the filament while single-stranded (ss)DNA is stabiized in the filament's interior. The ATP-DnaA-oriC complex binds and stabilizes one strand of the AT-rich DNA unwinding element (DUE), permitting loading of DNA polymerase. After initiation quickly degrades to an ADP-DnaA complex that is not apt for DNA replication. Binds acidic phospholipids. This Rhodopseudomonas palustris (strain HaA2) protein is Chromosomal replication initiator protein DnaA.